The following is a 1077-amino-acid chain: Insulin receptor substrate 2-B (1077 aa).

A disordered region spans residues 1–66 (MAGVLCPTEE…APASTAEDDV (66 aa)). 2 consecutive short sequence motifs (YXXM motif) follow at residues 33–36 (YRRM) and 147–150 (YFAM). Residues 65–170 (DVRKRGYLRK…WYQALSELIN (106 aa)) form the PH domain. In terms of domain architecture, IRS-type PTB spans 195–299 (FKEVWQVNVK…DTMKALKAYS (105 aa)). Disordered regions lie at residues 342–373 (ETVVGTPPSAKNNSFRFRTSSEGEGTMTRPFR), 428–464 (VCSSNGHGSASETLTRPSSSSVCGSPSDGGFISSDEY), and 476–495 (VRSNTPDSLGNTPPIQEENT). Composition is skewed to polar residues over residues 350 to 364 (SAKNNSFRFRTSSEG) and 428 to 444 (VCSSNGHGSASETLTRP). Residues 445 to 457 (SSSSVCGSPSDGG) show a composition bias toward low complexity. Polar residues predominate over residues 477–495 (RSNTPDSLGNTPPIQEENT). The YXXM motif 3 motif lies at 499-502 (YMSM). A compositionally biased stretch (polar residues) spans 530–544 (KPTNAASQQKSQTAV). Residues 530 to 571 (KPTNAASQQKSQTAVSLDEDSEETNKQFAYAESPKLKDSSHV) are disordered. 6 short sequence motifs (YXXM motif) span residues 595 to 598 (YMPM), 608 to 611 (YLPM), 634 to 637 (YMMM), 666 to 669 (YMDM), 713 to 716 (YVPM), and 891 to 894 (YTTM).

Post-translationally, phosphorylated by INSR.

In terms of biological role, potentiates insulin signaling. This is Insulin receptor substrate 2-B (irs2-b) from Xenopus laevis (African clawed frog).